The primary structure comprises 376 residues: Chanoclavine-I aldehyde reductase easA (376 aa).

Residues 29 to 31 (PTT), Ala-64, Gln-106, and His-173 contribute to the FMN site. Positions 173 and 176 each coordinate substrate. Tyr-178 acts as the Proton donor in catalysis. Residues Lys-225, Gly-297, 323 to 324 (GR), and Arg-324 each bind FMN. Substrate is bound at residue Tyr-351.

Belongs to the NADH:flavin oxidoreductase/NADH oxidase family. FMN is required as a cofactor.

The catalysed reaction is dihydrochanoclavine-I aldehyde + NADP(+) = chanoclavine-I aldehyde + NADPH + H(+). The protein operates within alkaloid biosynthesis; ergot alkaloid biosynthesis. Aldehyde reductase; part of the gene cluster that mediates the biosynthesis of fumiclavanine C, a fungal ergot alkaloid. DmaW catalyzes the first step of ergot alkaloid biosynthesis by condensing dimethylallyl diphosphate (DMAP) and tryptophan to form 4-dimethylallyl-L-tryptophan. The second step is catalyzed by the methyltransferase easF that methylates 4-dimethylallyl-L-tryptophan in the presence of S-adenosyl-L-methionine, resulting in the formation of 4-dimethylallyl-L-abrine. The catalase easC and the FAD-dependent oxidoreductase easE then transform 4-dimethylallyl-L-abrine to chanoclavine-I which is further oxidized by EasD in the presence of NAD(+), resulting in the formation of chanoclavine-I aldehyde. EasA reduces chanoclavine-I aldehyde to dihydrochanoclavine-I aldehyde that spontaneously dehydrates to form 6,8-dimethyl-6,7-didehydroergoline. EasG then catalyzes the reduction of 6,8-dimethyl-6,7-didehydroergoline to form festuclavine. Hydrolysis of festuclavine by easM then leads to the formation of fumigaclavine B which is in turn acetylated by easN to fumigaclavine A. Finally, easL catalyzes the conversion of fumigaclavine A into fumigaclavine C by attaching a dimethylallyl moiety to C-2 of the indole nucleus. The chain is Chanoclavine-I aldehyde reductase easA from Aspergillus fumigatus (strain ATCC MYA-4609 / CBS 101355 / FGSC A1100 / Af293) (Neosartorya fumigata).